A 455-amino-acid polypeptide reads, in one-letter code: F-box/FBD/LRR-repeat protein At3g51530 (455 aa).

Positions Met-1–Phe-26 are disordered. Residues Glu-29–Glu-75 enclose the F-box domain. LRR repeat units follow at residues Ile-80 to Val-106, Glu-155 to Ser-182, Val-183 to Arg-208, Thr-227 to Ser-257, Ile-277 to Leu-302, and Thr-325 to Asp-351. The FBD domain maps to Lys-370–Thr-417.

The polypeptide is F-box/FBD/LRR-repeat protein At3g51530 (Arabidopsis thaliana (Mouse-ear cress)).